We begin with the raw amino-acid sequence, 492 residues long: MGKLLELEGNLFEVMKEIRDELGSPNDLTIREVALAGSFTRCAVVFLCGLTDKDNVYKYVVRTLQYEEVQNEAAVVQTLLDRFISIAEVGKKTTFPDIINAILAGDTVILIDNIQTAIIINSRAWEKRSLEPPVTEDLIRGPRVGLNEDINVNKMLIRRSLRDPKLRFQSYIMGKRSQKEVTLVYIEDIINPHIVKELDRRLQSIVTDVVLETGTIEQLIQDNNLSPFPQFLNTERPDNIIASLAKGKAAILVDGSPFALIAPLVFVDIFQSVEDHYERWVIGTLLRFLRMGSGIIAVLLPAMYVALVSYHQGLIPSKLAYSIAGAREGVPFPAYIETLMMALTMELIREAGIRLPKPMGQTIGIVGGLVIGEAAVNAGIVNPFLVIIIAVTAIATFSLPVYSITITFRILLFVFVLAATAFGLYGIILALIALAIHITNLTSVGIPYTTPIAPAFYKDWKEEFIRMPKSMLKDRPEYLQTKDSTIRPKERK.

3 consecutive transmembrane segments (helical) span residues 295–315 (IIAV…QGLI), 384–404 (FLVI…VYSI), and 410–430 (ILLF…IILA).

The protein belongs to the GerABKA family.

Its subcellular location is the membrane. Contributes to the L-alanine germination response. The polypeptide is Spore germination protein GerLA (gerLA) (Bacillus cereus).